Reading from the N-terminus, the 249-residue chain is Methylthioribulose-1-phosphate dehydratase (249 aa).

Substrate is bound at residue Cys-102. Zn(2+)-binding residues include His-120 and His-122. Glu-148 acts as the Proton donor/acceptor in catalysis. Residue His-205 coordinates Zn(2+).

This sequence belongs to the aldolase class II family. MtnB subfamily. Zn(2+) is required as a cofactor.

The protein localises to the cytoplasm. It carries out the reaction 5-(methylsulfanyl)-D-ribulose 1-phosphate = 5-methylsulfanyl-2,3-dioxopentyl phosphate + H2O. It functions in the pathway amino-acid biosynthesis; L-methionine biosynthesis via salvage pathway; L-methionine from S-methyl-5-thio-alpha-D-ribose 1-phosphate: step 2/6. In terms of biological role, catalyzes the dehydration of methylthioribulose-1-phosphate (MTRu-1-P) into 2,3-diketo-5-methylthiopentyl-1-phosphate (DK-MTP-1-P). The protein is Methylthioribulose-1-phosphate dehydratase of Botryotinia fuckeliana (strain B05.10) (Noble rot fungus).